The sequence spans 421 residues: Proton extrusion protein PxcA (421 aa).

Residues P124 to D153 form a disordered region. Polar residues predominate over residues T125–K144. 4 consecutive transmembrane segments (helical) span residues F203 to V223, A298 to S318, I345 to I365, and F381 to I401.

Belongs to the CemA family.

It localises to the cell inner membrane. Functionally, required for H(+) efflux immediately after light irradiation to form a rapid H(+) concentration gradient across the thylakoid membranes. Together with PxcL, contributes to transient H(+) uptake following dark to light transition. The sequence is that of Proton extrusion protein PxcA from Synechococcus sp. (strain ATCC 27144 / PCC 6301 / SAUG 1402/1) (Anacystis nidulans).